A 224-amino-acid chain; its full sequence is UPF0173 metal-dependent hydrolase EAT1b_0495 (224 aa).

It belongs to the UPF0173 family.

This Exiguobacterium sp. (strain ATCC BAA-1283 / AT1b) protein is UPF0173 metal-dependent hydrolase EAT1b_0495.